Consider the following 250-residue polypeptide: Capsid protein (250 aa).

The tract at residues 1-31 (MPKRDAPWLMAGTSKVSRSGNYSPSGGMGSK) is disordered. Residues 3 to 19 (KRDAPWLMAGTSKVSRS) carry the Bipartite nuclear localization signal motif. Residues 14 to 31 (SKVSRSGNYSPSGGMGSK) show a composition bias toward polar residues. Positions 34-48 (KANAWVNRPMYRKPR) match the Nuclear localization signal motif. Residues 53–70 (YKSPDVPKGCEGPCKVQS) fold into a zinc finger. Positions 95–116 (ITHRVGKRFCVKSVYILGKIWM) match the Nuclear export signal motif. The Bipartite nuclear localization signal motif lies at 194 to 241 (RRFWKVNNHVVYNHQEAGKYENHTENALLLYMACTHASNPVYATLKIR).

This sequence belongs to the geminiviridae capsid protein family. As to quaternary structure, homomultimer. Binds to single-stranded and double-stranded viral DNA. Interacts (via nuclear localization signals) with host importin alpha-1a.

The protein localises to the virion. It is found in the host nucleus. Encapsidates the viral DNA into characteristic twinned ('geminate') particles. Binds the genomic viral ssDNA and shuttles it into and out of the cell nucleus. The CP of bipartite geminiviruses is not required for cell-to-cell or systemic movement. The polypeptide is Capsid protein (Bean golden yellow mosaic virus (isolate Puerto Rico) (BGYMV)).